The following is a 188-amino-acid chain: Adenine phosphoribosyltransferase (188 aa).

This sequence belongs to the purine/pyrimidine phosphoribosyltransferase family. Homodimer.

The protein localises to the cytoplasm. It carries out the reaction AMP + diphosphate = 5-phospho-alpha-D-ribose 1-diphosphate + adenine. Its pathway is purine metabolism; AMP biosynthesis via salvage pathway; AMP from adenine: step 1/1. Catalyzes a salvage reaction resulting in the formation of AMP, that is energically less costly than de novo synthesis. This is Adenine phosphoribosyltransferase from Burkholderia vietnamiensis (strain G4 / LMG 22486) (Burkholderia cepacia (strain R1808)).